The sequence spans 492 residues: Bifunctional purine biosynthesis protein PurH (492 aa).

The 144-residue stretch at 1–144 (MKKAILSVSN…KNFKHVTTIV (144 aa)) folds into the MGS-like domain.

The protein belongs to the PurH family.

The enzyme catalyses (6R)-10-formyltetrahydrofolate + 5-amino-1-(5-phospho-beta-D-ribosyl)imidazole-4-carboxamide = 5-formamido-1-(5-phospho-D-ribosyl)imidazole-4-carboxamide + (6S)-5,6,7,8-tetrahydrofolate. The catalysed reaction is IMP + H2O = 5-formamido-1-(5-phospho-D-ribosyl)imidazole-4-carboxamide. It participates in purine metabolism; IMP biosynthesis via de novo pathway; 5-formamido-1-(5-phospho-D-ribosyl)imidazole-4-carboxamide from 5-amino-1-(5-phospho-D-ribosyl)imidazole-4-carboxamide (10-formyl THF route): step 1/1. It functions in the pathway purine metabolism; IMP biosynthesis via de novo pathway; IMP from 5-formamido-1-(5-phospho-D-ribosyl)imidazole-4-carboxamide: step 1/1. The protein is Bifunctional purine biosynthesis protein PurH of Staphylococcus haemolyticus (strain JCSC1435).